Reading from the N-terminus, the 318-residue chain is Isoaspartyl peptidase/L-asparaginase (318 aa).

Threonine 180 functions as the Nucleophile in the catalytic mechanism. Substrate is bound by residues 208–211 (RVSD) and 229–232 (TGIG).

The protein belongs to the Ntn-hydrolase family. As to quaternary structure, heterotetramer of two alpha and two beta chains arranged as a dimer of alpha/beta heterodimers. Post-translationally, cleaved into an alpha and beta chain by autocatalysis; this activates the enzyme. The N-terminal residue of the beta subunit is responsible for the nucleophile hydrolase activity.

The catalysed reaction is Cleavage of a beta-linked Asp residue from the N-terminus of a polypeptide.. Functionally, degrades proteins damaged by L-isoaspartyl residue formation (also known as beta-Asp residues). Probably performs the final step in the degradation of the reserve polymer cyanophycin (depolymerizes the building block L-beta-Asp-Arg). Also has L-asparaginase activity. The chain is Isoaspartyl peptidase/L-asparaginase from Nostoc sp. (strain PCC 7120 / SAG 25.82 / UTEX 2576).